A 250-amino-acid chain; its full sequence is Ribonuclease 3 (250 aa).

Positions 1–15 are enriched in basic residues; the sequence is MTKTPAKKKRARSSK. A disordered region spans residues 1–21; that stretch reads MTKTPAKKKRARSSKAKGTDA. The 129-residue stretch at 22–150 folds into the RNase III domain; that stretch reads NAALEARIGH…VIGAIFLDGG (129 aa). Glutamate 63 contacts Mg(2+). Aspartate 67 is a catalytic residue. 2 residues coordinate Mg(2+): aspartate 136 and glutamate 139. Glutamate 139 is an active-site residue. One can recognise a DRBM domain in the interval 175 to 244; sequence DPKTVLQEWA…ASVMIEREGV (70 aa).

Belongs to the ribonuclease III family. In terms of assembly, homodimer. It depends on Mg(2+) as a cofactor.

Its subcellular location is the cytoplasm. The catalysed reaction is Endonucleolytic cleavage to 5'-phosphomonoester.. Functionally, digests double-stranded RNA. Involved in the processing of primary rRNA transcript to yield the immediate precursors to the large and small rRNAs (23S and 16S). Processes some mRNAs, and tRNAs when they are encoded in the rRNA operon. Processes pre-crRNA and tracrRNA of type II CRISPR loci if present in the organism. The protein is Ribonuclease 3 of Bradyrhizobium diazoefficiens (strain JCM 10833 / BCRC 13528 / IAM 13628 / NBRC 14792 / USDA 110).